The primary structure comprises 59 residues: Single-pass membrane and coiled-coil domain-containing protein 4 homolog (59 aa).

The span at 1–11 shows a compositional bias: basic residues; that stretch reads MAGRNKAKPRL. Residues 1–20 form a disordered region; the sequence is MAGRNKAKPRLSKKEKEERR. Residues 10–30 are a coiled coil; sequence RLSKKEKEERRKDMAEVQEKV. Residues 30-50 traverse the membrane as a helical segment; that stretch reads VFSVVVPVVVAFTVVIMLIVY.

This sequence belongs to the SMCO4 family.

It is found in the membrane. This chain is Single-pass membrane and coiled-coil domain-containing protein 4 homolog, found in Argas monolakensis (Mono lake bird tick).